Here is a 291-residue protein sequence, read N- to C-terminus: Lipoyl synthase (291 aa).

7 residues coordinate [4Fe-4S] cluster: C43, C48, C54, C69, C73, C76, and S280. The region spanning 55–269 (FSSRTATFLI…AAYGRARGIP (215 aa)) is the Radical SAM core domain.

Belongs to the radical SAM superfamily. Lipoyl synthase family. Requires [4Fe-4S] cluster as cofactor.

It is found in the cytoplasm. The catalysed reaction is [[Fe-S] cluster scaffold protein carrying a second [4Fe-4S](2+) cluster] + N(6)-octanoyl-L-lysyl-[protein] + 2 oxidized [2Fe-2S]-[ferredoxin] + 2 S-adenosyl-L-methionine + 4 H(+) = [[Fe-S] cluster scaffold protein] + N(6)-[(R)-dihydrolipoyl]-L-lysyl-[protein] + 4 Fe(3+) + 2 hydrogen sulfide + 2 5'-deoxyadenosine + 2 L-methionine + 2 reduced [2Fe-2S]-[ferredoxin]. It participates in protein modification; protein lipoylation via endogenous pathway; protein N(6)-(lipoyl)lysine from octanoyl-[acyl-carrier-protein]: step 2/2. Its function is as follows. Catalyzes the radical-mediated insertion of two sulfur atoms into the C-6 and C-8 positions of the octanoyl moiety bound to the lipoyl domains of lipoate-dependent enzymes, thereby converting the octanoylated domains into lipoylated derivatives. This chain is Lipoyl synthase, found in Oleidesulfovibrio alaskensis (strain ATCC BAA-1058 / DSM 17464 / G20) (Desulfovibrio alaskensis).